Consider the following 285-residue polypeptide: 2-methoxy-6-polyprenyl-1,4-benzoquinol methylase, mitochondrial (285 aa).

Residues 1–30 constitute a mitochondrion transit peptide; sequence MKGATNLFKSMRKPTNVGNFRQFSVNQVNS. Residues Thr106, Asp126, 156-157, and Ser173 contribute to the S-adenosyl-L-methionine site; that span reads NA.

It belongs to the class I-like SAM-binding methyltransferase superfamily. MenG/UbiE family. Component of a multi-subunit COQ enzyme complex.

It is found in the mitochondrion inner membrane. It catalyses the reaction a 2-methoxy-6-(all-trans-polyprenyl)benzene-1,4-diol + S-adenosyl-L-methionine = a 5-methoxy-2-methyl-3-(all-trans-polyprenyl)benzene-1,4-diol + S-adenosyl-L-homocysteine + H(+). It functions in the pathway cofactor biosynthesis; ubiquinone biosynthesis. Its function is as follows. Methyltransferase required for the conversion of 2-polyprenyl-6-methoxy-1,4-benzoquinol (DDMQH2) to 2-polyprenyl-3-methyl-6-methoxy-1,4-benzoquinol (DMQH2). This chain is 2-methoxy-6-polyprenyl-1,4-benzoquinol methylase, mitochondrial, found in Caenorhabditis elegans.